The primary structure comprises 284 residues: MKKHFKNLIKNSYFFLLITLIYLPLLIVVLVSLNGSSSRGNIVLDFGNVLNPNPDSKSAYLRLGETDFATPLINSIIIGVITVLVSVPIAVISAFALLRTRNALKKTIFGITNFSLATPDIITAISLVLLFANTWLSFNQQLGFFTIITSHISFSVPYALILIYPKIQKLNPNLILASQDLGYSPLKTFFHITLPYLMPSIFSAVLVVFATSFDDYVITSLVQGSVKTIATELYSFRKGIKAWAIAFGSILILISVLGVCLITLQKYLREKRKEIIKIRQWKNS.

A run of 6 helical transmembrane segments spans residues 13-33 (YFFL…LVSL), 76-96 (IIIG…SAFA), 116-136 (LATP…NTWL), 143-163 (GFFT…LILI), 189-209 (FFHI…LVVF), and 242-262 (AWAI…VCLI). Positions 72–263 (LINSIIIGVI…ISVLGVCLIT (192 aa)) constitute an ABC transmembrane type-1 domain.

The protein belongs to the binding-protein-dependent transport system permease family. CysTW subfamily.

The protein localises to the cell membrane. Its function is as follows. Required for the activity of the bacterial transport system of putrescine and spermidine. In Mycoplasma genitalium (strain ATCC 33530 / DSM 19775 / NCTC 10195 / G37) (Mycoplasmoides genitalium), this protein is Spermidine/putrescine transport system permease protein PotC homolog (potC).